The sequence spans 244 residues: CTD nuclear envelope phosphatase 1 (244 aa).

The chain crosses the membrane as a helical span at residues 7 to 29 (LLGLRGFVAFAAKLWSFVLYLLR). The FCP1 homology domain maps to 58 to 225 (QVKRKVLVLD…NLLPMLDALR (168 aa)).

Belongs to the dullard family. Interacts with bmpr1a, bmpr1b and bmpr2.

The protein localises to the membrane. It localises to the cytoplasm. It is found in the perinuclear region. It carries out the reaction O-phospho-L-seryl-[protein] + H2O = L-seryl-[protein] + phosphate. The catalysed reaction is O-phospho-L-threonyl-[protein] + H2O = L-threonyl-[protein] + phosphate. In terms of biological role, serine/threonine protein phosphatase that may dephosphorylate and activate lipins. Lipins are phosphatidate phosphatases that catalyze the conversion of phosphatidic acid to diacylglycerol and control the metabolism of fatty acids at different levels. May indirectly modulate the lipid composition of nuclear and/or endoplasmic reticulum membranes and be required for proper nuclear membrane morphology and/or dynamics. May also indirectly regulate the production of lipid droplets and triacylglycerol. Induces neuronal differentiation by antagonizing BMP signaling. Acts both by dephosphorylating BMPR1A and by promoting BMPR2 proteasomal degradation. The sequence is that of CTD nuclear envelope phosphatase 1 (ctdnep1) from Xenopus laevis (African clawed frog).